Consider the following 87-residue polypeptide: UPF0250 protein YE3006 (87 aa).

It belongs to the UPF0250 family.

This Yersinia enterocolitica serotype O:8 / biotype 1B (strain NCTC 13174 / 8081) protein is UPF0250 protein YE3006.